Here is a 96-residue protein sequence, read N- to C-terminus: Non-specific lipid-transfer protein 2 (96 aa).

The signal sequence occupies residues 1 to 27; the sequence is MMRKLAVLVLAVAMVAACGGGVVGVAG. Disulfide bonds link Cys30-Cys62, Cys38-Cys52, Cys53-Cys88, and Cys64-Cys95.

Functionally, transfer lipids across membranes. May play a role in plant defense or in the biosynthesis of cuticle layers. This Oryza sativa subsp. japonica (Rice) protein is Non-specific lipid-transfer protein 2 (LTP-2).